Reading from the N-terminus, the 410-residue chain is Lissencephaly-1 homolog A (410 aa).

The 33-residue stretch at Gln7 to Met39 folds into the LisH domain. Residues Thr56–Gly82 are a coiled coil. 7 WD repeats span residues Gly106–Lys147, Gly148–Thr187, Gly190–Thr229, Gly232–Glu271, Glu274–Thr333, Gly336–Thr375, and Ala378–Arg410.

It belongs to the WD repeat LIS1/nudF family. Can self-associate. Component of the cytosolic PAF-AH (I) heterotetrameric enzyme, which is composed of PAFAH1B1 (beta), PAFAH1B2 (alpha2) and PAFAH1B3 (alpha1) subunits. The catalytic activity of the enzyme resides in the alpha1 (PAFAH1B3) and alpha2 (PAFAH1B2) subunits, whereas the beta subunit (PAFAH1B1) has regulatory activity. Trimer formation is not essential for the catalytic activity. Interacts with dynein, dynactin, nde1 and ndel1.

It localises to the cytoplasm. The protein resides in the cytoskeleton. It is found in the microtubule organizing center. Its subcellular location is the centrosome. In terms of biological role, regulatory subunit (beta subunit) of the cytosolic type I platelet-activating factor (PAF) acetylhydrolase (PAF-AH (I)), an enzyme that catalyzes the hydrolyze of the acetyl group at the sn-2 position of PAF and its analogs and participates in PAF inactivation. Regulates the PAF-AH (I) activity in a catalytic dimer composition-dependent manner. Positively regulates the activity of the minus-end directed microtubule motor protein dynein. May enhance dynein-mediated microtubule sliding by targeting dynein to the microtubule plus end. Required for several dynein- and microtubule-dependent processes such as the maintenance of Golgi integrity, the peripheral transport of microtubule fragments and the coupling of the nucleus and centrosome. May be required for proliferation of neuronal precursors and neuronal migration. This chain is Lissencephaly-1 homolog A (pafah1b1-1), found in Salmo salar (Atlantic salmon).